The sequence spans 1121 residues: MQSTVPIAIASNGNKRDVVQNVSAGDEGDILQRLARNREMISTSLSPQKSSGFSGRRRSSSVRDALSSFFGTGNSPTSSMDDYSNLMNRNYSTASTAMCRGNSFPSDVGTKAYNITGSYQPDRHRNSVPYTTIDQLHTRQDTGLRRESDPVAAKQISSNNDIVRSFITHHASNSTMFINRVLSDYLADRGFIKQTPLYNKKSVLEISIATSAESVFLPTTKSDETEYLSLIHGSLNQARTQPVGSTNTAESDFLPSCPTMDTLNENNDLSLFPLHTQRTSPSNTARTGNAMDTSNSDRASPASNNNTTDADSFVASGNNNPMNNNNSPARNRHPNSHSRSLPNAWNSQMPSFSFALIFSLNKSTTLSDIKVELTSNVRVVWFNGLPPTKNVNEECYNIGSLDWTLNADNFNLFIPQGAKSPLDIVENHSNNRKLKVLQKLSMRKRRSFSNKAVLRENILNNLNASNSTNKLNAGVYVFTIPIVLASRIPESLYYPSARVSYSLRLATKLKDEHTQLVASRPRSSSISSPQKLRSYSCSDSYEYSQIDDTIEGETYNNDKNSTGKIAFPSSWLKSAKGRLKRNNSNGRSDNNGASSSGLAMQHDSEDTINLQYPLNLVRTPPEISVTTANKPLYINKVWENCLSYEISFAQKYVPLNGEIPITIKVAPLVKSLSVKRIRVSCREKISYRSKDYQYDFDQLDPLASDPCNPYHMRYLVRKKKDRSLPLFEVASKCTSGPSIREEVVTNTVDDNLLAYTSSKENNKDIPFSESFTVKTKLKFPKYCEVDATKAASLPPYGIDLFDPIKDPTQSENTSNNGNVLGFLVGRPNRASKTVHKIPQDKNHNEVNDTNGNSNTSLQTSSNVPIQHYTRLNKPRRGLYLDSMHFKNIQCSHKLEIVLRVSKTDSGSSKIIRHYEVIVDTPIYLISDLCNTSNIDLPTYDMATTESSKVLPPTFEEATSVSASPRSSVSYYPDDISMQQLNLSRSTSLANGYLSTLHPKTTAVSDSSNGAPIRDQQEQQARPLRTEDYALQMGNENNAYSNMDGLLSQDIFEQETAATLFKRDIVTMNFNNNIFTPRYSPRTFTNTDYNYNDNDNNDNDTEGPGPIIHPGPEPPRYDEISS.

Phosphoserine is present on residues S23, S46, and S127. Disordered stretches follow at residues 273-342 (PLHT…RSLP), 513-532 (HTQL…PQKL), 579-600 (LKRN…GLAM), and 837-860 (IPQD…LQTS). A compositionally biased stretch (polar residues) spans 276 to 310 (TQRTSPSNTARTGNAMDTSNSDRASPASNNNTTDA). Low complexity-rich tracts occupy residues 318 to 329 (NNNPMNNNNSPA), 519 to 529 (SRPRSSSISSP), and 582 to 597 (NNSN…SSSG). The residue at position 327 (S327) is a Phosphoserine. The segment covering 837–846 (IPQDKNHNEV) has biased composition (basic and acidic residues). A Glycyl lysine isopeptide (Lys-Gly) (interchain with G-Cter in ubiquitin) cross-link involves residue K841. Polar residues predominate over residues 847–860 (NDTNGNSNTSLQTS). Phosphoserine is present on S987. The segment covering 999 to 1009 (KTTAVSDSSNG) has biased composition (polar residues). Disordered stretches follow at residues 999-1022 (KTTA…QARP) and 1075-1121 (TPRY…EISS). Low complexity predominate over residues 1084-1093 (TNTDYNYNDN).

This sequence belongs to the CSR2 family. Post-translationally, phosphorylated by CDC28.

Its subcellular location is the cytoplasm. It localises to the nucleus. Its function is as follows. Transcription factor involved in the regulation of fermentation and aerobic oxidation. Acts as a repressor of CYC1, which is involved in electron flow through the mitochondria under aerobic condition. Required for pseudohyphal formation upon nitrogen starvation. May be involved in viability at stationary phase and aging. The protein is Transcription factor CSR2 (CSR2) of Saccharomyces cerevisiae (strain ATCC 204508 / S288c) (Baker's yeast).